The following is a 436-amino-acid chain: Zinc finger protein 101 (436 aa).

The KRAB domain maps to 4–82; sequence VAFEDVAVNF…RKEGNEHRET (79 aa). The C2H2-type 1 zinc finger occupies 102–124; that stretch reads CKCSVCGKVFLRHSFLDRHMRAH. Over residues 128-141 the composition is skewed to basic and acidic residues; the sequence is KRSECGGEWRETPR. The interval 128–164 is disordered; it reads KRSECGGEWRETPRKQKQHGKASISPSSGARRTVTPT. Residues 151 to 163 show a composition bias toward polar residues; sequence ISPSSGARRTVTP. Residues 169 to 191 form a C2H2-type 2 zinc finger; it reads YECKVCGKAFNSPNLFQIHQRTH. Residues 197–219 form a C2H2-type 3; degenerate zinc finger; sequence YKCREIVRAFTVSSFFRKHGKMH. 7 consecutive C2H2-type zinc fingers follow at residues 225–247, 253–276, 282–304, 310–332, 338–360, 366–388, and 394–416; these read YECK…VRTH, YKCK…IRSH, HQCQ…ERTH, YECQ…ERAH, YECN…KKTH, YECT…EMTH, and FDCK…ERTH.

It belongs to the krueppel C2H2-type zinc-finger protein family. Expressed in a variety of adult and fetal tissues.

It is found in the nucleus. May be involved in transcriptional regulation. This is Zinc finger protein 101 (ZNF101) from Homo sapiens (Human).